A 956-amino-acid chain; its full sequence is uncharacterized protein (956 aa).

The region spanning 40 to 141 (PATKVSIDKI…IYCMTKAREA (102 aa)) is the Fibronectin type-III domain. Disordered stretches follow at residues 152–173 (RNTI…PAPL) and 488–600 (NNGD…SYSH). Composition is skewed to polar residues over residues 153 to 165 (NTIT…QPRN) and 488 to 523 (NNGD…SRTG). Thr154 bears the Phosphothreonine mark. Phosphoserine is present on residues Ser501 and Ser520. Residues 524–543 (SIDLISNNNKSINNSNADSA) show a composition bias toward low complexity. Residues 552–563 (VSYSPSNEPIQP) are compositionally biased toward polar residues. Residues 564–574 (SSSLLSQLTQD) are compositionally biased toward low complexity. The span at 578-599 (RSMLSNHISSNNENKQQPSSYS) shows a compositional bias: polar residues. Phosphoserine occurs at positions 802, 842, and 895. A disordered region spans residues 875 to 956 (VGPKVPAKEP…NLFNPHSHDS (82 aa)). The span at 895–904 (SNSSISSAWS) shows a compositional bias: low complexity.

This is an uncharacterized protein from Saccharomyces cerevisiae (strain ATCC 204508 / S288c) (Baker's yeast).